We begin with the raw amino-acid sequence, 177 residues long: Large ribosomal subunit protein uL6 (177 aa).

It belongs to the universal ribosomal protein uL6 family. In terms of assembly, part of the 50S ribosomal subunit.

Its function is as follows. This protein binds to the 23S rRNA, and is important in its secondary structure. It is located near the subunit interface in the base of the L7/L12 stalk, and near the tRNA binding site of the peptidyltransferase center. This is Large ribosomal subunit protein uL6 from Saccharophagus degradans (strain 2-40 / ATCC 43961 / DSM 17024).